A 457-amino-acid chain; its full sequence is Dihydrolipoyllysine-residue acetyltransferase component of pyruvate dehydrogenase complex, mitochondrial (457 aa).

A mitochondrion-targeting transit peptide spans methionine 1–tyrosine 30. Residues histidine 36–valine 112 enclose the Lipoyl-binding domain. N6-lipoyllysine is present on lysine 77. The segment at alanine 129 to glycine 168 is disordered. Over residues proline 139 to serine 149 the composition is skewed to basic and acidic residues. Lysine 148 bears the N6-crotonyllysine mark. The region spanning asparagine 179–isoleucine 216 is the Peripheral subunit-binding (PSBD) domain. Catalysis depends on residues histidine 430 and aspartate 434.

The protein belongs to the 2-oxoacid dehydrogenase family. Eukaryotic pyruvate dehydrogenase (PDH) complexes are organized as a core consisting of the oligomeric dihydrolipoamide acetyl-transferase (E2), around which are arranged multiple copies of pyruvate dehydrogenase (E1), dihydrolipoamide dehydrogenase (E3) and protein X (E3BP) bound by non-covalent bonds. Interacts with SIR5; the interaction is direct. (R)-lipoate serves as cofactor. Post-translationally, decrotonylated at 'Lys-148' by SIR5, which inhibits the activity of the pyruvate dehydrogenase complex (PDC).

The protein localises to the mitochondrion matrix. It carries out the reaction N(6)-[(R)-dihydrolipoyl]-L-lysyl-[protein] + acetyl-CoA = N(6)-[(R)-S(8)-acetyldihydrolipoyl]-L-lysyl-[protein] + CoA. Functionally, the pyruvate dehydrogenase complex catalyzes the overall conversion of pyruvate to acetyl-CoA and CO(2). High pyruvate dehydrogenase complex activity is required for sufficient energy production during germination of conidia. This is Dihydrolipoyllysine-residue acetyltransferase component of pyruvate dehydrogenase complex, mitochondrial from Fusarium oxysporum f. sp. lycopersici (strain 4287 / CBS 123668 / FGSC 9935 / NRRL 34936) (Fusarium vascular wilt of tomato).